The chain runs to 227 residues: Cytochrome c oxidase subunit 2 (227 aa).

The Mitochondrial intermembrane portion of the chain corresponds to 1–14; it reads MAHPVQLGLQDATS. The helical transmembrane segment at 15 to 45 threads the bilayer; sequence PVMEELVTFHDHALMAMFLISFLILYALSAT. Over 46–59 the chain is Mitochondrial matrix; sequence LTTKLTNTNITDAQ. A helical membrane pass occupies residues 60–87; that stretch reads EMETIWTILPAVILVLIALPSLRILYMT. The Mitochondrial intermembrane portion of the chain corresponds to 88–227; it reads DEINNPSFTI…IFEMGPVFTL (140 aa). Cu cation is bound by residues His-161, Cys-196, Glu-198, Cys-200, His-204, and Met-207. Glu-198 contributes to the Mg(2+) binding site.

This sequence belongs to the cytochrome c oxidase subunit 2 family. In terms of assembly, component of the cytochrome c oxidase (complex IV, CIV), a multisubunit enzyme composed of 14 subunits. The complex is composed of a catalytic core of 3 subunits MT-CO1, MT-CO2 and MT-CO3, encoded in the mitochondrial DNA, and 11 supernumerary subunits COX4I, COX5A, COX5B, COX6A, COX6B, COX6C, COX7A, COX7B, COX7C, COX8 and NDUFA4, which are encoded in the nuclear genome. The complex exists as a monomer or a dimer and forms supercomplexes (SCs) in the inner mitochondrial membrane with NADH-ubiquinone oxidoreductase (complex I, CI) and ubiquinol-cytochrome c oxidoreductase (cytochrome b-c1 complex, complex III, CIII), resulting in different assemblies (supercomplex SCI(1)III(2)IV(1) and megacomplex MCI(2)III(2)IV(2)). Found in a complex with TMEM177, COA6, COX18, COX20, SCO1 and SCO2. Interacts with TMEM177 in a COX20-dependent manner. Interacts with COX20. Interacts with COX16. Cu cation serves as cofactor.

The protein localises to the mitochondrion inner membrane. The catalysed reaction is 4 Fe(II)-[cytochrome c] + O2 + 8 H(+)(in) = 4 Fe(III)-[cytochrome c] + 2 H2O + 4 H(+)(out). In terms of biological role, component of the cytochrome c oxidase, the last enzyme in the mitochondrial electron transport chain which drives oxidative phosphorylation. The respiratory chain contains 3 multisubunit complexes succinate dehydrogenase (complex II, CII), ubiquinol-cytochrome c oxidoreductase (cytochrome b-c1 complex, complex III, CIII) and cytochrome c oxidase (complex IV, CIV), that cooperate to transfer electrons derived from NADH and succinate to molecular oxygen, creating an electrochemical gradient over the inner membrane that drives transmembrane transport and the ATP synthase. Cytochrome c oxidase is the component of the respiratory chain that catalyzes the reduction of oxygen to water. Electrons originating from reduced cytochrome c in the intermembrane space (IMS) are transferred via the dinuclear copper A center (CU(A)) of subunit 2 and heme A of subunit 1 to the active site in subunit 1, a binuclear center (BNC) formed by heme A3 and copper B (CU(B)). The BNC reduces molecular oxygen to 2 water molecules using 4 electrons from cytochrome c in the IMS and 4 protons from the mitochondrial matrix. This chain is Cytochrome c oxidase subunit 2 (MT-CO2), found in Theropithecus gelada (Gelada baboon).